Here is a 303-residue protein sequence, read N- to C-terminus: Glucosyl-3-phosphoglycerate synthase (303 aa).

UDP-alpha-D-glucose contacts are provided by residues 35 to 39 (PALNE), Ser-66, Lys-99, and 119 to 120 (DS). Asp-121 contributes to the Mn(2+) binding site. 166–169 (GRVT) contributes to the (2R)-3-phosphoglycerate binding site. UDP-alpha-D-glucose is bound by residues 211–214 (YGVE) and 238–243 (RAHRNR). His-240 serves as a coordination point for Mn(2+). Asn-242 serves as a coordination point for (2R)-3-phosphoglycerate.

Belongs to the glycosyltransferase 2 family. Homotrimer. Mg(2+) is required as a cofactor. The cofactor is Mn(2+).

The enzyme catalyses an NDP-alpha-D-glucose + (2R)-3-phosphoglycerate = (2R)-2-O-(alpha-D-glucopyranosyl)-3-phospho-glycerate + a ribonucleoside 5'-diphosphate + H(+). It carries out the reaction (2R)-3-phosphoglycerate + UDP-alpha-D-glucose = (2R)-2-O-(alpha-D-glucopyranosyl)-3-phospho-glycerate + UDP + H(+). The catalysed reaction is ADP-alpha-D-glucose + (2R)-3-phosphoglycerate = (2R)-2-O-(alpha-D-glucopyranosyl)-3-phospho-glycerate + ADP + H(+). It catalyses the reaction GDP-D-glucose + (2R)-3-phosphoglycerate = (2R)-2-O-(alpha-D-glucopyranosyl)-3-phospho-glycerate + GDP + H(+). In terms of biological role, involved in the biosynthesis of 6-O-methylglucose lipopolysaccarides (MGLPs). Catalyzes the transfer of the glucose moiety from a nuleotide sugar such as UDP-alpha-D-glucose to the position 2 of 3-phospho-D-glycerate (3-PGA) to form glucosyl-3-phosphoglycerate (GPG). It can use UDP-glucose, ADP-glucose and GDP-glucose as sugar donor substrates with decreasing affinity and with 3-PGA as an acceptor. D-glycerate can only be an acceptor with ADP-glucose and at a very low rate. The polypeptide is Glucosyl-3-phosphoglycerate synthase (gpgS) (Mycolicibacterium smegmatis (strain ATCC 700084 / mc(2)155) (Mycobacterium smegmatis)).